The chain runs to 476 residues: Dihydrolipoyl dehydrogenase (476 aa).

FAD contacts are provided by residues 36–45, Lys-54, and Ala-117; that span reads EHQERLGGVC. Cys-45 and Cys-50 are oxidised to a cystine. NAD(+)-binding positions include 182–186, Asp-205, Val-238, and 271–274; these read GGGII and AIGR. Asp-314 and Ala-322 together coordinate FAD. His-446 acts as the Proton acceptor in catalysis.

It belongs to the class-I pyridine nucleotide-disulfide oxidoreductase family. Homodimer. It depends on FAD as a cofactor.

It localises to the cytoplasm. The catalysed reaction is N(6)-[(R)-dihydrolipoyl]-L-lysyl-[protein] + NAD(+) = N(6)-[(R)-lipoyl]-L-lysyl-[protein] + NADH + H(+). In terms of biological role, lipoamide dehydrogenase is a component of the alpha-ketoacid dehydrogenase complexes. The polypeptide is Dihydrolipoyl dehydrogenase (lpdA) (Buchnera aphidicola subsp. Schizaphis graminum (strain Sg)).